Here is a 461-residue protein sequence, read N- to C-terminus: Ribonuclease inhibitor (461 aa).

Residue Ser2 is modified to N-acetylserine. A 2 X 5 AA tandem repeats of S-L-D-I-Q region spans residues 2 to 11 (SLDIQSLDIQ). LRR repeat units follow at residues 20-48 (WAEL…CKDI), 49-76 (SSAL…VHCV), 77-105 (LQGL…CGVL), 106-133 (SSTL…LQLL), 134-162 (CEGL…CKPL), 163-190 (ASVL…VRVL), 191-219 (CQGL…CRDL), 220-247 (CGIV…MAEL), 248-276 (CPGL…CGDL), 277-304 (CRVL…ARLL), 305-333 (CETL…CSHF), 334-361 (SSVL…VQEL), 362-390 (CQGL…CSSL), 391-418 (AATL…ILQL), and 419-447 (VESV…EDRL). Residue Ser91 is modified to Phosphoserine.

In terms of assembly, forms high-affinity heterodimers with RNASE1, ANG and RNASE2.

Its subcellular location is the cytoplasm. The protein localises to the nucleus. Functionally, ribonuclease inhibitor which inhibits RNASE1, RNASE2 and angiogenin (ANG). May play a role in redox homeostasis. Required to inhibit the cytotoxic tRNA ribonuclease activity of ANG in the cytoplasm in absence of stress. Relocates to the nucleus in response to stress, relieving inhibition of ANG in the cytoplasm, and inhibiting the angiogenic activity of ANG in the nucleus. The chain is Ribonuclease inhibitor (RNH1) from Pan troglodytes (Chimpanzee).